The chain runs to 236 residues: uncharacterized protein (236 aa).

This sequence belongs to the HyuE racemase family.

The protein resides in the cytoplasm. This is an uncharacterized protein from Schizosaccharomyces pombe (strain 972 / ATCC 24843) (Fission yeast).